The chain runs to 345 residues: Phosphoribosylformylglycinamidine cyclo-ligase (345 aa).

This sequence belongs to the AIR synthase family.

It is found in the cytoplasm. The enzyme catalyses 2-formamido-N(1)-(5-O-phospho-beta-D-ribosyl)acetamidine + ATP = 5-amino-1-(5-phospho-beta-D-ribosyl)imidazole + ADP + phosphate + H(+). It functions in the pathway purine metabolism; IMP biosynthesis via de novo pathway; 5-amino-1-(5-phospho-D-ribosyl)imidazole from N(2)-formyl-N(1)-(5-phospho-D-ribosyl)glycinamide: step 2/2. The protein is Phosphoribosylformylglycinamidine cyclo-ligase of Shewanella sp. (strain ANA-3).